An 876-amino-acid chain; its full sequence is Leucine--tRNA ligase (876 aa).

The 'HIGH' region signature appears at 42–52 (PYPSGKLHMGH). The 'KMSKS' region motif lies at 634-638 (KMSKS). ATP is bound at residue lysine 637.

It belongs to the class-I aminoacyl-tRNA synthetase family.

The protein localises to the cytoplasm. The catalysed reaction is tRNA(Leu) + L-leucine + ATP = L-leucyl-tRNA(Leu) + AMP + diphosphate. In Neisseria gonorrhoeae (strain ATCC 700825 / FA 1090), this protein is Leucine--tRNA ligase.